Consider the following 365-residue polypeptide: UDP-N-acetylglucosamine--N-acetylmuramyl-(pentapeptide) pyrophosphoryl-undecaprenol N-acetylglucosamine transferase (365 aa).

Residues 17–19 (TGG), N129, R167, S194, I250, 269–274 (ALTVSE), and Q295 contribute to the UDP-N-acetyl-alpha-D-glucosamine site.

Belongs to the glycosyltransferase 28 family. MurG subfamily.

Its subcellular location is the cell inner membrane. The catalysed reaction is di-trans,octa-cis-undecaprenyl diphospho-N-acetyl-alpha-D-muramoyl-L-alanyl-D-glutamyl-meso-2,6-diaminopimeloyl-D-alanyl-D-alanine + UDP-N-acetyl-alpha-D-glucosamine = di-trans,octa-cis-undecaprenyl diphospho-[N-acetyl-alpha-D-glucosaminyl-(1-&gt;4)]-N-acetyl-alpha-D-muramoyl-L-alanyl-D-glutamyl-meso-2,6-diaminopimeloyl-D-alanyl-D-alanine + UDP + H(+). It functions in the pathway cell wall biogenesis; peptidoglycan biosynthesis. Its function is as follows. Cell wall formation. Catalyzes the transfer of a GlcNAc subunit on undecaprenyl-pyrophosphoryl-MurNAc-pentapeptide (lipid intermediate I) to form undecaprenyl-pyrophosphoryl-MurNAc-(pentapeptide)GlcNAc (lipid intermediate II). The protein is UDP-N-acetylglucosamine--N-acetylmuramyl-(pentapeptide) pyrophosphoryl-undecaprenol N-acetylglucosamine transferase of Shewanella piezotolerans (strain WP3 / JCM 13877).